The following is a 204-amino-acid chain: Ciliary microtubule inner protein 7 (204 aa).

Its subcellular location is the cell projection. It localises to the cilium. This chain is Ciliary microtubule inner protein 7, found in Homo sapiens (Human).